Reading from the N-terminus, the 480-residue chain is Ribulose bisphosphate carboxylase large chain (480 aa).

Positions 1–2 (MS) are excised as a propeptide. Residue P3 is modified to N-acetylproline. K14 is subject to N6,N6,N6-trimethyllysine. The substrate site is built by N123 and T173. K175 (proton acceptor) is an active-site residue. K177 contributes to the substrate binding site. 3 residues coordinate Mg(2+): K201, D203, and E204. K201 is subject to N6-carboxylysine. The active-site Proton acceptor is H294. Residues R295, H327, and S379 each contribute to the substrate site.

The protein belongs to the RuBisCO large chain family. Type I subfamily. As to quaternary structure, heterohexadecamer of 8 large chains and 8 small chains; disulfide-linked. The disulfide link is formed within the large subunit homodimers. Mg(2+) serves as cofactor. Post-translationally, the disulfide bond which can form in the large chain dimeric partners within the hexadecamer appears to be associated with oxidative stress and protein turnover.

It is found in the plastid. The protein resides in the chloroplast. The enzyme catalyses 2 (2R)-3-phosphoglycerate + 2 H(+) = D-ribulose 1,5-bisphosphate + CO2 + H2O. It catalyses the reaction D-ribulose 1,5-bisphosphate + O2 = 2-phosphoglycolate + (2R)-3-phosphoglycerate + 2 H(+). Functionally, ruBisCO catalyzes two reactions: the carboxylation of D-ribulose 1,5-bisphosphate, the primary event in carbon dioxide fixation, as well as the oxidative fragmentation of the pentose substrate in the photorespiration process. Both reactions occur simultaneously and in competition at the same active site. This Rivina humilis (Rougeplant) protein is Ribulose bisphosphate carboxylase large chain.